The sequence spans 554 residues: 2-succinyl-5-enolpyruvyl-6-hydroxy-3-cyclohexene-1-carboxylate synthase (554 aa).

This sequence belongs to the TPP enzyme family. MenD subfamily. In terms of assembly, homodimer. Requires Mg(2+) as cofactor. It depends on Mn(2+) as a cofactor. The cofactor is thiamine diphosphate.

It catalyses the reaction isochorismate + 2-oxoglutarate + H(+) = 5-enolpyruvoyl-6-hydroxy-2-succinyl-cyclohex-3-ene-1-carboxylate + CO2. It participates in quinol/quinone metabolism; 1,4-dihydroxy-2-naphthoate biosynthesis; 1,4-dihydroxy-2-naphthoate from chorismate: step 2/7. The protein operates within quinol/quinone metabolism; menaquinone biosynthesis. In terms of biological role, catalyzes the thiamine diphosphate-dependent decarboxylation of 2-oxoglutarate and the subsequent addition of the resulting succinic semialdehyde-thiamine pyrophosphate anion to isochorismate to yield 2-succinyl-5-enolpyruvyl-6-hydroxy-3-cyclohexene-1-carboxylate (SEPHCHC). The chain is 2-succinyl-5-enolpyruvyl-6-hydroxy-3-cyclohexene-1-carboxylate synthase from Renibacterium salmoninarum (strain ATCC 33209 / DSM 20767 / JCM 11484 / NBRC 15589 / NCIMB 2235).